The following is a 2457-amino-acid chain: Large tegument protein deneddylase (2457 aa).

The deubiquitination activity stretch occupies residues 1–234 (MALPASLAGF…SDLHGSKIIL (234 aa)). Residues 13–224 (EGTASTNQAD…IMSHYKVISF (212 aa)) enclose the Peptidase C76 domain. Catalysis depends on residues cysteine 33, aspartate 163, and histidine 165. Disordered stretches follow at residues 281-350 (EEWT…LPSV), 2064-2131 (ITEG…PIIP), 2164-2360 (GHSG…PQPQ), and 2387-2407 (GMSDDKNPEPCVKENPPGVTH). Residues 293–302 (SGRTPPEKMT) are compositionally biased toward basic and acidic residues. Residues 314 to 334 (TMDDDVIDLTGDDDMEDESEG) are compositionally biased toward acidic residues. Basic and acidic residues predominate over residues 2080-2091 (TQDHMEEPDNKQ). Positions 2115–2131 (SPSPSPPVLTPIKPIIP) are enriched in pro residues. A compositionally biased stretch (polar residues) spans 2173-2186 (HIQSSTPGPAQNTR). Basic and acidic residues predominate over residues 2387–2398 (GMSDDKNPEPCV).

This sequence belongs to the herpesviridae large tegument protein family. Interacts with host CUL1 and CUL4A; these interactions inhibit the E3 ligase activity of cullins. Interacts with inner tegument protein. Interacts with capsid vertex specific component CVC2. Interacts with the major capsid protein/MCP.

The protein localises to the virion tegument. It localises to the host cytoplasm. The protein resides in the host nucleus. The catalysed reaction is Thiol-dependent hydrolysis of ester, thioester, amide, peptide and isopeptide bonds formed by the C-terminal Gly of ubiquitin (a 76-residue protein attached to proteins as an intracellular targeting signal).. Its function is as follows. Large tegument protein that plays multiple roles in the viral cycle. During viral entry, remains associated with the capsid while most of the tegument is detached and participates in the capsid transport toward the host nucleus. Plays a role in the routing of the capsid at the nuclear pore complex and subsequent uncoating. Within the host nucleus, acts as a deneddylase and promotes the degradation of nuclear CRLs (cullin-RING ubiquitin ligases) and thereby stabilizes nuclear CRL substrates, while cytoplasmic CRLs remain unaffected. These modifications prevent host cell cycle S-phase progression and create a favorable environment allowing efficient viral genome replication. Participates later in the secondary envelopment of capsids. Indeed, plays a linker role for the association of the outer viral tegument to the capsids together with the inner tegument protein. The sequence is that of Large tegument protein deneddylase from Apodemus sylvaticus (European woodmouse).